Reading from the N-terminus, the 2429-residue chain is MKVDERVAIIGTGCRFPGGSNSPHELWELLVNPRDVARKVPPDRFNIAAFHHPQMGHHGTTAAWESYFLDENIQRFDASFFNISPTEAAAMDPQQRLLLETVYESLDRAGLRLEELQGTQTGVFCGLMRHDYHRLLTADMETNPPYALAGTAGSVLANRVSYFFDWHGPSITIDTACSSSLVAVHLACESLRKGECSLAIVGGSNLLLSPDPYIWESKMQLLSPTNRCHMWDASADGFACGEGVASVVLKRLTDALADGDHIECVIRATGVNSDGRSPGLTMPNSNAQSALIMDTYARAGLHPKQNPHDRCQFFEAHGTGTKAGDPQEAAAIQDALFGCNMEENQPNNETVYVGSIKTIIGHTAGAAGLAGVIRASLALQNGVVPPNLHFNRVSDTVAPHTTHLEVPTRAVRWPELPSGVPRRVSVNSFGFGGTNAHAILESFDQASRHPSTQVERVHQSQQALLPIVFSAASQSSLADLLEGYVQWLFDNPNVDLLGLASSLLLRRSTLRYRKAFIAASPDELRIKIQHELKRNTTDAQWAIMSPPKREGGNCILGVFTGQGAQWPQMGLELIQNCPQARMRLRELQQSLDDLPIEYRPGFTLLDELSAPESQSRLGETALSLPLRTALQIIQIDLLRALGITFNAVVGHSSGEIAAVYAAGILNATDAIRVAYLRGFAVKHAASRGKMIAVNLTEHQANAICSQPMWKGQVAVAAYNSPSNVTLSGDPETMDELVWLLRSLERHTHPLNTDAAYHSHHMQPCAGPYLQALKSCNVGVSSPSSVQMFSSVYKGLVVNSTDCALDSTYWCDNMLRPVLFSQAISTCLDQIPDINLIIEVGPHTALQGSIKHILHDTLSEGSVVPYIGLAHRGEDSIQSMAAAIGRLWAYLGMRDLKLQQYIQLFGPFRESCCVQSLPTYPFDHRTSYWAEPRLSQARLHCPIPPHPLLGVLSSECGRDEWRWRNYLHLEEIPWLTGHRILSDISYPPMGYIAMAVEAAQAASRSKPLQLVEIHSLIIERTISIPVEGPGIETLFKMDIESADNDTMTGTFQCQISCGNEFQKCASGRVILALGEANPTVLPSKSKGMSISYPMNVDKFYNQLQIVGGNVSDIFRGITELTRQEGGMQGVANVPSHDQPTFHPVVMTTALQVLWGAMMSDEGRLSALPLPVRIDSVTINPSCSHSGHVCLEASITRTGSGRNGCGDVLVFNGQGDGIAQLEGIHLTLSKPKNSSDDQALAFGTTVWGPLNPDPSIGYPKNLPYNLSIQNLQARLAVLYLRDAQAGLTAQDRERLVSHRRHYVAWMDSTLSKIRDGVHPHYPRDWLLGTIGELDSQTTSHETLIHVTHIVGQNLLQFLSGGEETILLKLRDNNIDLLTRYYQDDEAMRIMSDSLGKVVSQIVFRNPQLHVLEVGAGTGSATRAILSSIGRNYHSYTYTDISPAFFEGASAAFHTHEDRFIYKVLDVECDVTDQGFSMHSYDVVIASNVLHATRSLRRTLMNIRKLIKPSGYLVLLEGTDPDRVPTPFIFGAFEGWWLGEDDGRSGGPLIRREEWDVLLQCTGFGRCTSYTPTNQANLYGMSVIVSQPTDMPAIPVIEMDLLLVGGSTETTRQIILDLKTILRDSFVQISSCLSVDDFTPGPGISQLAILCLAELDHHSEETRWQWQDMRLMMTAASCLLWVSPADDPHSGVSKGLLRSLALDSSSGLLQHLTVIDSTPIGAEMLATTLMNLVRTKQEGMGRPEIELGWGEGILNIPRIVRDPTITQRLLASRSPCVFNLVDVREQAVCRLVSTEGSQKEKVDVYLTDPKNATTSAAKLFSNESIVQYQVHYCTQAALTITEKCSLFLIVGQNVFNGARQLALSISHGSIISTPLSWAWDVPASVSTDNEPKLLAAVAATILAFAIADLAGPSSTLWVHEAQAMGPTFMDALVSAVSDRQDIKNLTLTTSQCGLSDTRVHFVHPHSSTKTLSSVLPRNVSSAVLFDDGRLSRRSRLVLPRCANFRSFSDFFRPSSIIEEIDIQSVATILNSACAFVTRKGYEKGSSPRIISPREQSSVDSLEVVNWRQPTWIEAQILPASSLVSLSPTMAYVVVNMNHKLRRLVLDFLVRQGARHIVWVGEWSDEDFAWIAQLSRDEVHVAVVQMWAFLSSISDLYDQLTSTRKAEIPISSLQTYMPIGGIIYDGLKDSPQQAAENTLLLDELCGNDATFFILVGSLLGHIGFTDSNSFIGSTTGVLSGVISRRRQRGYVGSVLYLGEQNAVEDITLSAGDIREAFSEAILLGPPESTSNGEILAGLRNSEKWELVPKLSAWNESKTLLESDDKSQSAGQGQAHDTDAVTQLKLATSVAEAREIILQLFKEKLRRKLGLSSDVPLRRETLLHELGIDSLVAVDIHIWFARELGAKIPVVQIMGAGSIGSMVDEVVKRRNGFT.

Positions 4 to 442 (DERVAIIGTG…GTNAHAILES (439 aa)) constitute a Ketosynthase family 3 (KS3) domain. Catalysis depends on for beta-ketoacyl synthase activity residues Cys177, His317, and His362. The segment at 558 to 873 (VFTGQGAQWP…PYIGLAHRGE (316 aa)) is malonyl-CoA:ACP transacylase (MAT) domain. Ser652 acts as the For acyl/malonyl transferase activity in catalysis. Positions 945–1075 (HPLLGVLSSE…GRVILALGEA (131 aa)) are N-terminal hotdog fold. The product template (PT) domain stretch occupies residues 945–1227 (HPLLGVLSSE…QLEGIHLTLS (283 aa)). The region spanning 945–1233 (HPLLGVLSSE…LTLSKPKNSS (289 aa)) is the PKS/mFAS DH domain. Residues 1090 to 1233 (SYPMNVDKFY…LTLSKPKNSS (144 aa)) form a C-terminal hotdog fold region. A methyltransferase (CMeT) domain region spans residues 1409–2158 (LEVGAGTGSA…ISDLYDQLTS (750 aa)). The region spanning 2350 to 2425 (EIILQLFKEK…SMVDEVVKRR (76 aa)) is the Carrier domain. Ser2385 bears the O-(pantetheine 4'-phosphoryl)serine mark.

The protein operates within secondary metabolite biosynthesis. Reducing polyketide synthase; part of the gene cluster that mediates the biosynthesis of 2,4'-dihydroxy-3'-methoxypropiophenone. The first step of the pathway is the conversion of acetate into acetyl-CoA by the acyl-CoA ligase ppsA. Acetyl-CoA is then used as a starter unit by the polyketide synthase ppsB and condensed with 4 malonyl-CoA unit to produce the pentaketide backbone. During polyketide extension, the polykedite chain is probably reduced and dehydrated by the KR and PT domains, respectively. O-methylation seems to be catalyzed by an unknown methyltransferase rather than by the CMeT domain of ppsB. Two hydroxylations and one further decarboxylation step catalyzed by yet unknown enzymes are then required to yield 4'-hydroxy-3'-methoxypropiophenone. PpsC functions as a carrier protein to transport 4'-hydroxy-3'-methoxypropiophenone to a specific cell compartment in which 4'-hydroxy-3'-methoxypropiophenone is hydroxylated to 2,4'-dihydroxy-3'-methoxypropiophenone by a still to be identified enzyme. The chain is Reducing polyketide synthase ppsB from Aspergillus oryzae (strain ATCC 42149 / RIB 40) (Yellow koji mold).